The sequence spans 137 residues: CDGSH iron-sulfur domain-containing protein 3, mitochondrial (137 aa).

K65 carries the N6-acetyllysine; alternate modification. The residue at position 65 (K65) is an N6-succinyllysine; alternate. Positions 70, 72, 81, and 85 each coordinate [2Fe-2S] cluster. K96 is modified (N6-acetyllysine). Positions 108, 110, 119, and 123 each coordinate [2Fe-2S] cluster. K124 carries the post-translational modification N6-acetyllysine; alternate. K124 carries the N6-succinyllysine; alternate modification.

Belongs to the CISD protein family. Monomer. It depends on [2Fe-2S] cluster as a cofactor.

It localises to the mitochondrion. Can transfer its iron-sulfur clusters to the apoferrodoxins FDX1 and FDX2. Contributes to mitochondrial iron homeostasis and in maintaining normal levels of free iron and reactive oxygen species, and thereby contributes to normal mitochondrial function. The chain is CDGSH iron-sulfur domain-containing protein 3, mitochondrial (Cisd3) from Mus musculus (Mouse).